The chain runs to 89 residues: Small ribosomal subunit protein uS15 (89 aa).

It belongs to the universal ribosomal protein uS15 family. Part of the 30S ribosomal subunit. Forms a bridge to the 50S subunit in the 70S ribosome, contacting the 23S rRNA.

Functionally, one of the primary rRNA binding proteins, it binds directly to 16S rRNA where it helps nucleate assembly of the platform of the 30S subunit by binding and bridging several RNA helices of the 16S rRNA. In terms of biological role, forms an intersubunit bridge (bridge B4) with the 23S rRNA of the 50S subunit in the ribosome. The sequence is that of Small ribosomal subunit protein uS15 from Escherichia coli O139:H28 (strain E24377A / ETEC).